Reading from the N-terminus, the 78-residue chain is Musculoskeletal embryonic nuclear protein 1 (78 aa).

Disordered regions lie at residues 1–33 (MSQP…QEIK) and 45–78 (QMGS…SVFG). A Nuclear localization signal motif is present at residues 6 to 14 (PVKKKRPPV). Residues 64 to 78 (VFEKSKDEPPKSVFG) show a composition bias toward basic and acidic residues.

It belongs to the MUSTN1 family. Predominantly expressed in heart and skeletal muscle. Detected in skeletal muscle satellite cells where expression increases with cell proliferation.

It localises to the nucleus. Its function is as follows. Promotes the differentiation and proliferation of skeletal muscle satellite cells. This chain is Musculoskeletal embryonic nuclear protein 1 (MUSTN1), found in Gallus gallus (Chicken).